The following is a 192-amino-acid chain: Pyridoxal 5'-phosphate synthase subunit PdxT (192 aa).

53–55 contacts L-glutamine; it reads GES. Catalysis depends on cysteine 82, which acts as the Nucleophile. Residues arginine 108 and 134 to 135 each bind L-glutamine; that span reads IR. Active-site charge relay system residues include histidine 170 and glutamate 172.

Belongs to the glutaminase PdxT/SNO family. In the presence of PdxS, forms a dodecamer of heterodimers. Only shows activity in the heterodimer.

The catalysed reaction is aldehydo-D-ribose 5-phosphate + D-glyceraldehyde 3-phosphate + L-glutamine = pyridoxal 5'-phosphate + L-glutamate + phosphate + 3 H2O + H(+). It carries out the reaction L-glutamine + H2O = L-glutamate + NH4(+). Its pathway is cofactor biosynthesis; pyridoxal 5'-phosphate biosynthesis. Functionally, catalyzes the hydrolysis of glutamine to glutamate and ammonia as part of the biosynthesis of pyridoxal 5'-phosphate. The resulting ammonia molecule is channeled to the active site of PdxS. The polypeptide is Pyridoxal 5'-phosphate synthase subunit PdxT (Methanosphaera stadtmanae (strain ATCC 43021 / DSM 3091 / JCM 11832 / MCB-3)).